The following is a 371-amino-acid chain: 4-hydroxy-3-methylbut-2-en-1-yl diphosphate synthase (flavodoxin) (371 aa).

4 residues coordinate [4Fe-4S] cluster: Cys269, Cys272, Cys304, and Glu311.

This sequence belongs to the IspG family. It depends on [4Fe-4S] cluster as a cofactor.

The catalysed reaction is (2E)-4-hydroxy-3-methylbut-2-enyl diphosphate + oxidized [flavodoxin] + H2O + 2 H(+) = 2-C-methyl-D-erythritol 2,4-cyclic diphosphate + reduced [flavodoxin]. It participates in isoprenoid biosynthesis; isopentenyl diphosphate biosynthesis via DXP pathway; isopentenyl diphosphate from 1-deoxy-D-xylulose 5-phosphate: step 5/6. Converts 2C-methyl-D-erythritol 2,4-cyclodiphosphate (ME-2,4cPP) into 1-hydroxy-2-methyl-2-(E)-butenyl 4-diphosphate. The polypeptide is 4-hydroxy-3-methylbut-2-en-1-yl diphosphate synthase (flavodoxin) (Acinetobacter baumannii (strain AB307-0294)).